Consider the following 156-residue polypeptide: Ribosomal RNA large subunit methyltransferase H (156 aa).

S-adenosyl-L-methionine contacts are provided by residues leucine 73, glycine 104, and 123-128 (ISSMTL).

It belongs to the RNA methyltransferase RlmH family. As to quaternary structure, homodimer.

The protein localises to the cytoplasm. The enzyme catalyses pseudouridine(1915) in 23S rRNA + S-adenosyl-L-methionine = N(3)-methylpseudouridine(1915) in 23S rRNA + S-adenosyl-L-homocysteine + H(+). Its function is as follows. Specifically methylates the pseudouridine at position 1915 (m3Psi1915) in 23S rRNA. The chain is Ribosomal RNA large subunit methyltransferase H from Burkholderia cenocepacia (strain ATCC BAA-245 / DSM 16553 / LMG 16656 / NCTC 13227 / J2315 / CF5610) (Burkholderia cepacia (strain J2315)).